A 257-amino-acid polypeptide reads, in one-letter code: Hydroxyacylglutathione hydrolase (257 aa).

Zn(2+)-binding residues include His-54, His-56, Asp-58, His-59, His-113, Asp-137, and His-175.

This sequence belongs to the metallo-beta-lactamase superfamily. Glyoxalase II family. As to quaternary structure, monomer. Zn(2+) serves as cofactor.

The catalysed reaction is an S-(2-hydroxyacyl)glutathione + H2O = a 2-hydroxy carboxylate + glutathione + H(+). It functions in the pathway secondary metabolite metabolism; methylglyoxal degradation; (R)-lactate from methylglyoxal: step 2/2. In terms of biological role, thiolesterase that catalyzes the hydrolysis of S-D-lactoyl-glutathione to form glutathione and D-lactic acid. The sequence is that of Hydroxyacylglutathione hydrolase from Microcystis aeruginosa (strain NIES-843 / IAM M-2473).